Reading from the N-terminus, the 357-residue chain is Protein RecA (357 aa).

An ATP-binding site is contributed by 71–78 (GPESSGKT).

Belongs to the RecA family.

It localises to the cytoplasm. Functionally, can catalyze the hydrolysis of ATP in the presence of single-stranded DNA, the ATP-dependent uptake of single-stranded DNA by duplex DNA, and the ATP-dependent hybridization of homologous single-stranded DNAs. It interacts with LexA causing its activation and leading to its autocatalytic cleavage. The sequence is that of Protein RecA from Ehrlichia chaffeensis (strain ATCC CRL-10679 / Arkansas).